A 153-amino-acid polypeptide reads, in one-letter code: Mitotic-spindle organizing protein 2 (153 aa).

The segment at 80–153 (KVSETSTGDA…SSSSSQLTSN (74 aa)) is disordered. 2 stretches are compositionally biased toward polar residues: residues 81-99 (VSET…TAVP) and 107-133 (KMSS…SATR). A compositionally biased stretch (low complexity) spans 134–153 (GQKSTKSSGSSSSSSQLTSN).

This sequence belongs to the MOZART2 family. In terms of assembly, part of the gamma-tubulin complex. Interacts with TUBG1.

It localises to the cytoplasm. Its subcellular location is the cytoskeleton. The protein localises to the microtubule organizing center. The protein resides in the centrosome. It is found in the spindle. The chain is Mitotic-spindle organizing protein 2 (mzt2) from Danio rerio (Zebrafish).